The sequence spans 901 residues: Probable inorganic carbon transporter subunit DabA (901 aa).

Cysteine 424, aspartate 426, histidine 606, and cysteine 621 together coordinate Zn(2+).

Belongs to the inorganic carbon transporter (TC 9.A.2) DabA family. As to quaternary structure, forms a complex with DabB. The cofactor is Zn(2+).

The protein resides in the cell membrane. Functionally, part of an energy-coupled inorganic carbon pump. This is Probable inorganic carbon transporter subunit DabA from Staphylococcus aureus (strain bovine RF122 / ET3-1).